Reading from the N-terminus, the 325-residue chain is NADH-quinone oxidoreductase subunit H (325 aa).

8 consecutive transmembrane segments (helical) span residues 11–31 (ILLT…CGAF), 81–101 (VIFT…FAIV), 114–134 (IGIL…LFAG), 154–174 (LSYE…AGSF), 186–206 (VWNV…GVAV), 237–257 (FFVG…TLFF), 265–285 (LPPF…FILI), and 304–324 (ICLP…LWQA).

The protein belongs to the complex I subunit 1 family. NDH-1 is composed of 13 different subunits. Subunits NuoA, H, J, K, L, M, N constitute the membrane sector of the complex.

It localises to the cell inner membrane. The enzyme catalyses a quinone + NADH + 5 H(+)(in) = a quinol + NAD(+) + 4 H(+)(out). Its function is as follows. NDH-1 shuttles electrons from NADH, via FMN and iron-sulfur (Fe-S) centers, to quinones in the respiratory chain. The immediate electron acceptor for the enzyme in this species is believed to be ubiquinone. Couples the redox reaction to proton translocation (for every two electrons transferred, four hydrogen ions are translocated across the cytoplasmic membrane), and thus conserves the redox energy in a proton gradient. This subunit may bind ubiquinone. The protein is NADH-quinone oxidoreductase subunit H of Escherichia coli O7:K1 (strain IAI39 / ExPEC).